Consider the following 153-residue polypeptide: Pheromone-binding protein Gp-9 (153 aa).

Positions 1–19 are cleaved as a signal peptide; sequence MKTFVLHIFIFALVAFASA. Intrachain disulfides connect Cys-37/Cys-77, Cys-73/Cys-129, and Cys-118/Cys-138.

This sequence belongs to the PBP/GOBP family. Homodimer.

Its subcellular location is the secreted. Functionally, colony queen number, a major feature of social organization, is associated with worker genotype for Gp-9. Colonies are headed by either a single reproductive queen (monogyne form) or multiple queens (polygyne form). Differences in worker Gp-9 genotypes between social forms may cause differences in workers' abilities to recognize queens and regulate their numbers. The chain is Pheromone-binding protein Gp-9 from Solenopsis invicta (Red imported fire ant).